The following is an 879-amino-acid chain: Alanine--tRNA ligase (879 aa).

Zn(2+) contacts are provided by His567, His571, Cys669, and His673.

Belongs to the class-II aminoacyl-tRNA synthetase family. It depends on Zn(2+) as a cofactor.

It localises to the cytoplasm. The enzyme catalyses tRNA(Ala) + L-alanine + ATP = L-alanyl-tRNA(Ala) + AMP + diphosphate. Functionally, catalyzes the attachment of alanine to tRNA(Ala) in a two-step reaction: alanine is first activated by ATP to form Ala-AMP and then transferred to the acceptor end of tRNA(Ala). Also edits incorrectly charged Ser-tRNA(Ala) and Gly-tRNA(Ala) via its editing domain. The sequence is that of Alanine--tRNA ligase from Lactobacillus helveticus (strain DPC 4571).